Reading from the N-terminus, the 245-residue chain is Orotidine 5'-phosphate decarboxylase (245 aa).

Substrate is bound by residues Asp-22, Lys-44, 71–80 (DLKFHDIPNT), Thr-131, Arg-192, Gln-201, Gly-221, and Arg-222. Residue Lys-73 is the Proton donor of the active site.

Belongs to the OMP decarboxylase family. Type 1 subfamily. As to quaternary structure, homodimer.

It carries out the reaction orotidine 5'-phosphate + H(+) = UMP + CO2. It functions in the pathway pyrimidine metabolism; UMP biosynthesis via de novo pathway; UMP from orotate: step 2/2. Catalyzes the decarboxylation of orotidine 5'-monophosphate (OMP) to uridine 5'-monophosphate (UMP). This is Orotidine 5'-phosphate decarboxylase from Salmonella typhimurium (strain LT2 / SGSC1412 / ATCC 700720).